The primary structure comprises 550 residues: Putative pentatricopeptide repeat-containing protein At5g37570 (550 aa).

PPR repeat units follow at residues 73–107 (GTYLWNHLIKGYSNKFLFFETVSILMRMMRTGLAR), 109–143 (DEYTFPLVMKVCSNNGQVRVGSSVHGLVLRIGFDK), 144–174 (DVVVGTSFVDFYGKCKDLFSARKVFGEMPER), 175–205 (NAVSWTALVVAYVKSGELEEAKSMFDLMPER), 206–240 (NLGSWNALVDGLVKSGDLVNAKKLFDEMPKRDIIS), 241–267 (YTSMIDGYAKGGDMVSARDLFEEARGV), 268–302 (DVRAWSALILGYAQNGQPNEAFKVFSEMCAKNVKP), 303–333 (DEFIMVGLMSACSQMGCFELCEKVDSYLHQR), 339–369 (SHYVVPALIDMNAKCGHMDRAAKLFEEMPQR), 370–404 (DLVSYCSMMEGMAIHGCGSEAIRLFEKMVDEGIVP), 405–435 (DEVAFTVILKVCGQSRLVEEGLRYFELMRKK), and 441–475 (SPDHYSCIVNLLSRTGKLKEAYELIKSMPFEAHAS). Positions 476–550 (AWGSLLGGCS…KICGRSWISR (75 aa)) are type E motif.

The protein belongs to the PPR family. PCMP-E subfamily.

This is Putative pentatricopeptide repeat-containing protein At5g37570 (PCMP-E37) from Arabidopsis thaliana (Mouse-ear cress).